The primary structure comprises 39 residues: Cytochrome b559 subunit beta (39 aa).

Residues 14–30 (WLAVHGLAVPTVFFLGA) form a helical membrane-spanning segment. His-18 is a heme binding site.

The protein belongs to the PsbE/PsbF family. In terms of assembly, heterodimer of an alpha subunit and a beta subunit. PSII is composed of 1 copy each of membrane proteins PsbA, PsbB, PsbC, PsbD, PsbE, PsbF, PsbH, PsbI, PsbJ, PsbK, PsbL, PsbM, PsbT, PsbX, PsbY, PsbZ, Psb30/Ycf12, at least 3 peripheral proteins of the oxygen-evolving complex and a large number of cofactors. It forms dimeric complexes. The cofactor is heme b.

It localises to the plastid. The protein resides in the chloroplast thylakoid membrane. Its function is as follows. This b-type cytochrome is tightly associated with the reaction center of photosystem II (PSII). PSII is a light-driven water:plastoquinone oxidoreductase that uses light energy to abstract electrons from H(2)O, generating O(2) and a proton gradient subsequently used for ATP formation. It consists of a core antenna complex that captures photons, and an electron transfer chain that converts photonic excitation into a charge separation. The polypeptide is Cytochrome b559 subunit beta (Physcomitrium patens (Spreading-leaved earth moss)).